The sequence spans 179 residues: Large ribosomal subunit protein uL5 (179 aa).

Belongs to the universal ribosomal protein uL5 family. Part of the 50S ribosomal subunit; part of the 5S rRNA/L5/L18/L25 subcomplex. Contacts the 5S rRNA and the P site tRNA. Forms a bridge to the 30S subunit in the 70S ribosome.

In terms of biological role, this is one of the proteins that bind and probably mediate the attachment of the 5S RNA into the large ribosomal subunit, where it forms part of the central protuberance. In the 70S ribosome it contacts protein S13 of the 30S subunit (bridge B1b), connecting the 2 subunits; this bridge is implicated in subunit movement. Contacts the P site tRNA; the 5S rRNA and some of its associated proteins might help stabilize positioning of ribosome-bound tRNAs. This is Large ribosomal subunit protein uL5 from Geobacillus kaustophilus (strain HTA426).